Here is a 1292-residue protein sequence, read N- to C-terminus: Myosin-1 (1292 aa).

The Myosin motor domain occupies 35–714 (VGVSDLTLLS…TLFALENMRD (680 aa)). 128–135 (GESGAGKT) contributes to the ATP binding site. At serine 356 the chain carries Phosphoserine. An actin-binding region spans residues 403 to 485 (SIGILDIYGF…PGIFAALNDS (83 aa)). 2 IQ domains span residues 718-738 (HNMA…RIDS) and 739-764 (AIRI…YGNK). The 191-residue stretch at 770–960 (KERRAMSLLG…TIMVRRGRPG (191 aa)) folds into the TH1 domain. Disordered regions lie at residues 956–991 (RGRP…GHPT), 1017–1180 (YSLN…FPLK), and 1227–1258 (PVAS…SAAT). Positions 1062-1081 (MDNSSAAYGNASALPNSAPS) are enriched in polar residues. Composition is skewed to pro residues over residues 1087 to 1121 (ASRP…PMPR) and 1142 to 1155 (APPP…PPAA). The region spanning 1157–1219 (PSEPVYEAAF…PTAYIVESKA (63 aa)) is the SH3 domain. Low complexity predominate over residues 1240-1258 (ATREAGTTSAATAAASAAT).

The protein belongs to the TRAFAC class myosin-kinesin ATPase superfamily. Myosin family. Phosphorylation of the TEDS site (Ser-356) is required for the polarization of the actin cytoskeleton. Phosphorylation probably activates the myosin-I ATPase activity.

The protein resides in the cytoplasm. It localises to the cytoskeleton. Its subcellular location is the actin patch. Its function is as follows. Type-I myosin implicated in the organization of the actin cytoskeleton. Required for proper actin cytoskeleton polarization. At the cell cortex, assembles in patch-like structures together with proteins from the actin-polymerizing machinery and promotes actin assembly. Functions as actin nucleation-promoting factor (NPF) for the Arp2/3 complex. The sequence is that of Myosin-1 (MYO1) from Eremothecium gossypii (strain ATCC 10895 / CBS 109.51 / FGSC 9923 / NRRL Y-1056) (Yeast).